The sequence spans 213 residues: Nodulin-27 (213 aa).

Positions 1 to 20 (MEKMRVVLITLLLFIGAAVA) are cleaved as a signal peptide.

It belongs to the nodulin 20 family.

In Glycine max (Soybean), this protein is Nodulin-27.